The following is a 394-amino-acid chain: Chorismate synthase (394 aa).

NADP(+)-binding residues include R40 and R46. FMN is bound by residues 135 to 137 (RAS) and 255 to 256 (QA). Residues 270–291 (RRRGSGAHDEIEPAGAGSRRVR) are disordered. Residues G302, 317-321 (KPISS), and R343 contribute to the FMN site.

The protein belongs to the chorismate synthase family. Homotetramer. FMNH2 is required as a cofactor.

It catalyses the reaction 5-O-(1-carboxyvinyl)-3-phosphoshikimate = chorismate + phosphate. It functions in the pathway metabolic intermediate biosynthesis; chorismate biosynthesis; chorismate from D-erythrose 4-phosphate and phosphoenolpyruvate: step 7/7. Catalyzes the anti-1,4-elimination of the C-3 phosphate and the C-6 proR hydrogen from 5-enolpyruvylshikimate-3-phosphate (EPSP) to yield chorismate, which is the branch point compound that serves as the starting substrate for the three terminal pathways of aromatic amino acid biosynthesis. This reaction introduces a second double bond into the aromatic ring system. This Frankia casuarinae (strain DSM 45818 / CECT 9043 / HFP020203 / CcI3) protein is Chorismate synthase.